Consider the following 146-residue polypeptide: Putative pre-16S rRNA nuclease (146 aa).

This sequence belongs to the YqgF nuclease family.

The protein resides in the cytoplasm. In terms of biological role, could be a nuclease involved in processing of the 5'-end of pre-16S rRNA. The chain is Putative pre-16S rRNA nuclease from Pseudomonas savastanoi pv. phaseolicola (strain 1448A / Race 6) (Pseudomonas syringae pv. phaseolicola (strain 1448A / Race 6)).